The following is a 645-amino-acid chain: Sister chromatid cohesion protein 1 (645 aa).

Disordered stretches follow at residues 292 to 311 (FEPE…FALE), 495 to 527 (QSGF…GQLE), and 619 to 645 (CPLS…MRPV).

The protein belongs to the rad21 family. Component of the cohesin complex, composed of the smc-1 and smc-3 heterodimer attached via their hinge domain, scc-1 which links them, and scc-3. Interacts with smc-1, smc-3, scc-3 and tim-1.

It localises to the nucleus. The protein localises to the chromosome. The protein resides in the cytoplasm. Cleavable component of the cohesin complex involved in chromosome cohesion during cell cycle. The cohesin complex is required for the cohesion of sister chromatids after DNA replication. The cohesin complex apparently forms a large proteinaceous ring within which sister chromatids can be trapped. At metaphase-anaphase transition, this protein is cleaved and dissociates from chromatin, allowing sister chromatids to segregate. This Caenorhabditis elegans protein is Sister chromatid cohesion protein 1.